The chain runs to 1212 residues: uncharacterized protein (1212 aa).

Positions 783–802 (TRQDASGGSSSGTKKGEKLQ) are disordered.

This is an uncharacterized protein from Human herpesvirus 6B (strain Z29) (HHV-6 variant B).